A 256-amino-acid polypeptide reads, in one-letter code: Rano class II histocompatibility antigen, B alpha chain (256 aa).

A signal peptide spans 1 to 23; the sequence is MPLSRALILGVLALTTMLSPCGG. The segment at 24–111 is alpha-1; the sequence is QDDIEADHVG…KRSNSTPAVN (88 aa). Residues 24–218 are Extracellular-facing; the sequence is QDDIEADHVG…IPAPMSELTE (195 aa). Residues 108–206 enclose the Ig-like C1-type domain; it reads PAVNEVPEAT…LDEPVLRHWE (99 aa). Positions 112-205 are alpha-2; sequence EVPEATVFSK…SLDEPVLRHW (94 aa). Cysteine 134 and cysteine 190 are oxidised to a cystine. Asparagine 145 carries N-linked (GlcNAc...) asparagine glycosylation. A connecting peptide region spans residues 206 to 218; sequence EPEIPAPMSELTE. A helical transmembrane segment spans residues 219–244; it reads TVVCALGLSVGLVGIVVGTIFIIQGL. Residues 245–256 are Cytoplasmic-facing; it reads RSVAPSRHPGPL.

This sequence belongs to the MHC class II family.

The protein localises to the membrane. The sequence is that of Rano class II histocompatibility antigen, B alpha chain (RT1-Ba) from Rattus norvegicus (Rat).